The sequence spans 180 residues: MRFFVFTCLLAVALAKNGIEQRSASEEIVSFYQEKYKQDSNAAIYPTNQETPSVSSSEESVEVQTEKDEQIEEENVYLKQLKRIKQIFQKFYIPQYPEVYQQQIVMNPWKHVKTTTYPVPIPETTRIPLEEIVKKIVEMIKFNQLHQFVIPQYVQALQQRIAMNPWHHVTPFRSFPVLNF.

The signal sequence occupies residues 1–15 (MRFFVFTCLLAVALA). Ser23 and Ser25 each carry phosphoserine. Residues 46-66 (PTNQETPSVSSSEESVEVQTE) form a disordered region.

The protein belongs to the alpha-casein family. In terms of tissue distribution, mammary gland specific. Secreted in milk.

Its subcellular location is the secreted. In terms of biological role, important role in the capacity of milk to transport calcium phosphate. This is Alpha-S2-casein-like A (CSN1S2A) from Oryctolagus cuniculus (Rabbit).